The primary structure comprises 156 residues: Small ribosomal subunit protein uS7c (156 aa).

The protein belongs to the universal ribosomal protein uS7 family. As to quaternary structure, part of the 30S ribosomal subunit.

It localises to the plastid. The protein localises to the chloroplast. Functionally, one of the primary rRNA binding proteins, it binds directly to 16S rRNA where it nucleates assembly of the head domain of the 30S subunit. The protein is Small ribosomal subunit protein uS7c (rps7) of Guillardia theta (Cryptophyte).